The primary structure comprises 243 residues: Ubiquinone/menaquinone biosynthesis C-methyltransferase UbiE (243 aa).

Residues Thr69, Asp90, and Asp116 to Ala117 contribute to the S-adenosyl-L-methionine site.

The protein belongs to the class I-like SAM-binding methyltransferase superfamily. MenG/UbiE family.

The enzyme catalyses a 2-demethylmenaquinol + S-adenosyl-L-methionine = a menaquinol + S-adenosyl-L-homocysteine + H(+). It catalyses the reaction a 2-methoxy-6-(all-trans-polyprenyl)benzene-1,4-diol + S-adenosyl-L-methionine = a 5-methoxy-2-methyl-3-(all-trans-polyprenyl)benzene-1,4-diol + S-adenosyl-L-homocysteine + H(+). It functions in the pathway quinol/quinone metabolism; menaquinone biosynthesis; menaquinol from 1,4-dihydroxy-2-naphthoate: step 2/2. It participates in cofactor biosynthesis; ubiquinone biosynthesis. Methyltransferase required for the conversion of demethylmenaquinol (DMKH2) to menaquinol (MKH2) and the conversion of 2-polyprenyl-6-methoxy-1,4-benzoquinol (DDMQH2) to 2-polyprenyl-3-methyl-6-methoxy-1,4-benzoquinol (DMQH2). The protein is Ubiquinone/menaquinone biosynthesis C-methyltransferase UbiE of Burkholderia multivorans (strain ATCC 17616 / 249).